Consider the following 105-residue polypeptide: Replication restart protein PriB (105 aa).

In terms of domain architecture, SSB spans 1–102; that stretch reads MTANRLTLSG…LHAEQIELID (102 aa).

This sequence belongs to the PriB family. As to quaternary structure, homodimer. Interacts with PriA and DnaT. Component of the replication restart primosome. Primosome assembly occurs via a 'hand-off' mechanism. PriA binds to replication forks, subsequently PriB then DnaT bind; DnaT then displaces ssDNA to generate the helicase loading substrate.

Functionally, involved in the restart of stalled replication forks, which reloads the replicative helicase on sites other than the origin of replication; the PriA-PriB pathway is the major replication restart pathway. During primosome assembly it facilitates complex formation between PriA and DnaT on DNA; stabilizes PriA on DNA. Stimulates the DNA unwinding activity of PriA helicase. The protein is Replication restart protein PriB of Serratia proteamaculans (strain 568).